The primary structure comprises 769 residues: Neutral alpha-glucosidase C (769 aa).

The Nucleophile role is filled by aspartate 366. Residue glutamate 369 is part of the active site. Aspartate 442 serves as the catalytic Proton donor.

Belongs to the glycosyl hydrolase 31 family.

It carries out the reaction Hydrolysis of terminal, non-reducing (1-&gt;4)-linked alpha-D-glucose residues with release of alpha-D-glucose.. Functionally, has alpha-glucosidase activity. This is Neutral alpha-glucosidase C (GANC) from Macaca fascicularis (Crab-eating macaque).